A 239-amino-acid polypeptide reads, in one-letter code: tRNA1(Val) (adenine(37)-N6)-methyltransferase (239 aa).

This sequence belongs to the methyltransferase superfamily. tRNA (adenine-N(6)-)-methyltransferase family.

It is found in the cytoplasm. It carries out the reaction adenosine(37) in tRNA1(Val) + S-adenosyl-L-methionine = N(6)-methyladenosine(37) in tRNA1(Val) + S-adenosyl-L-homocysteine + H(+). Its function is as follows. Specifically methylates the adenine in position 37 of tRNA(1)(Val) (anticodon cmo5UAC). The polypeptide is tRNA1(Val) (adenine(37)-N6)-methyltransferase (Vibrio parahaemolyticus serotype O3:K6 (strain RIMD 2210633)).